Here is a 398-residue protein sequence, read N- to C-terminus: 1-deoxy-D-xylulose 5-phosphate reductoisomerase (398 aa).

NADPH-binding residues include threonine 10, glycine 11, serine 12, isoleucine 13, glycine 36, asparagine 38, and asparagine 124. Lysine 125 lines the 1-deoxy-D-xylulose 5-phosphate pocket. NADPH is bound at residue glutamate 126. Aspartate 150 contacts Mn(2+). Serine 151, glutamate 152, serine 176, and histidine 199 together coordinate 1-deoxy-D-xylulose 5-phosphate. Position 152 (glutamate 152) interacts with Mn(2+). Position 205 (glycine 205) interacts with NADPH. 4 residues coordinate 1-deoxy-D-xylulose 5-phosphate: serine 212, asparagine 217, lysine 218, and glutamate 221. Residue glutamate 221 coordinates Mn(2+).

Belongs to the DXR family. Mg(2+) is required as a cofactor. Requires Mn(2+) as cofactor.

It carries out the reaction 2-C-methyl-D-erythritol 4-phosphate + NADP(+) = 1-deoxy-D-xylulose 5-phosphate + NADPH + H(+). Its pathway is isoprenoid biosynthesis; isopentenyl diphosphate biosynthesis via DXP pathway; isopentenyl diphosphate from 1-deoxy-D-xylulose 5-phosphate: step 1/6. Catalyzes the NADPH-dependent rearrangement and reduction of 1-deoxy-D-xylulose-5-phosphate (DXP) to 2-C-methyl-D-erythritol 4-phosphate (MEP). In Nostoc punctiforme (strain ATCC 29133 / PCC 73102), this protein is 1-deoxy-D-xylulose 5-phosphate reductoisomerase.